A 595-amino-acid polypeptide reads, in one-letter code: Sucrose transport protein SUT4 (595 aa).

Topologically, residues 1–61 are cytoplasmic; sequence MDSAAGGGGL…PAARTTTTRK (61 aa). The segment at 29–55 is disordered; that stretch reads SLNGGTPRGGSPKDPDATHQQGPPAAR. A helical transmembrane segment spans residues 62–82; sequence LVLACMVAAGVQFGWALQLSL. Topologically, residues 83 to 97 are extracellular; that stretch reads LTPYIQTLGIDHAMA. Residues 98-118 traverse the membrane as a helical segment; it reads SFIWLCGPITGFVVQPCVGVW. The Cytoplasmic portion of the chain corresponds to 119–130; the sequence is SDKCRSKYGRRR. A helical membrane pass occupies residues 131–151; it reads PFILAGCLMICFAVTLIGFSA. Topologically, residues 152 to 173 are extracellular; sequence DLGYILGDTTEHCSTYKGSRFR. The chain crosses the membrane as a helical span at residues 174-194; that stretch reads AAIIFVLGFWMLDLANNTVQG. Over 195-213 the chain is Cytoplasmic; that stretch reads PARALLADLSGPDQCNSAN. The helical transmembrane segment at 214–234 threads the bilayer; sequence AIFCTWMAVGNVLGFSSGASG. Residues 235-256 lie on the Extracellular side of the membrane; the sequence is NWHKWFPFLMTRACCEACSNLK. Residues 257 to 277 form a helical membrane-spanning segment; sequence AAFLVAVVFLLFCMSVTLYFA. Residues 278–365 are Cytoplasmic-facing; that stretch reads EEIPLEPTDA…LTSMRHLPPG (88 aa). Positions 291 to 340 are disordered; sequence SDSAPLLNGSRDDNNASNEPRNGALPNGHTDGSNVPANSNAEDSNSNREN. A compositionally biased stretch (polar residues) spans 320-334; it reads TDGSNVPANSNAEDS. A helical transmembrane segment spans residues 366-386; sequence MYSVLLVMALTWLSWFPFFLF. Residues 387-417 lie on the Extracellular side of the membrane; it reads DTDWMGREVYHGDPNGNLSERKAYDNGVREG. N403 carries an N-linked (GlcNAc...) asparagine glycan. A helical transmembrane segment spans residues 418 to 438; it reads AFGLLLNSVVLGIGSFLVDPL. The Cytoplasmic segment spans residues 439–447; that stretch reads CRLMGARLV. The chain crosses the membrane as a helical span at residues 448–468; it reads WAISNFTVFICMLATAILSWI. Residues 469–491 are Extracellular-facing; the sequence is SFDLYSSKLHHIIGANKTVKNSA. A glycan (N-linked (GlcNAc...) asparagine) is linked at N484. The helical transmembrane segment at 492 to 512 threads the bilayer; sequence LIVFSLLGLPLSITYSVPFSV. Topologically, residues 513–525 are cytoplasmic; that stretch reads TAELTAGTGGGQG. The helical transmembrane segment at 526-546 threads the bilayer; that stretch reads LATGVLNLAIVVPQIVVSLGA. Topologically, residues 547–556 are extracellular; sequence GPWDALFGGG. Residues 557-577 traverse the membrane as a helical segment; sequence NVPAFALASVFSLGAGVLAVL. Topologically, residues 578 to 595 are cytoplasmic; sequence KLPKLPNSYRSAGFHGFG.

The protein belongs to the glycoside-pentoside-hexuronide (GPH) cation symporter transporter (TC 2.A.2.4) family. As to quaternary structure, homodimer.

The protein resides in the cell membrane. The protein operates within glycan biosynthesis; sucrose metabolism. Responsible for the transport of sucrose into the cell, with the concomitant uptake of protons (symport system). May also transport other glucosides. The sequence is that of Sucrose transport protein SUT4 (SUT4) from Oryza sativa subsp. indica (Rice).